Reading from the N-terminus, the 180-residue chain is uncharacterized protein (180 aa).

Residues 3–33 (QQQSNNSNDNKEQLDRVIESLNRVNSETKQI) are a coiled coil.

This is an uncharacterized protein from Acanthamoeba polyphaga (Amoeba).